A 445-amino-acid chain; its full sequence is Phosphoglucosamine mutase (445 aa).

Serine 102 acts as the Phosphoserine intermediate in catalysis. Mg(2+) is bound by residues serine 102, aspartate 241, aspartate 243, and aspartate 245. Position 102 is a phosphoserine (serine 102).

Belongs to the phosphohexose mutase family. Requires Mg(2+) as cofactor. Activated by phosphorylation.

The enzyme catalyses alpha-D-glucosamine 1-phosphate = D-glucosamine 6-phosphate. Functionally, catalyzes the conversion of glucosamine-6-phosphate to glucosamine-1-phosphate. The protein is Phosphoglucosamine mutase of Shewanella oneidensis (strain ATCC 700550 / JCM 31522 / CIP 106686 / LMG 19005 / NCIMB 14063 / MR-1).